Consider the following 330-residue polypeptide: WRKY transcription factor WRKY51 (330 aa).

The segment at 39-61 (QTGTSERSPAPAPAQEQQQQQQV) is disordered. The span at 51–60 (PAQEQQQQQQ) shows a compositional bias: low complexity. The Nuclear localization signal motif lies at 74 to 81 (FKKVISML). Disordered regions lie at residues 91–117 (RGPV…SAVS) and 302–330 (YEGE…LPLA). Residues 101-117 (PAASEPAPVRSSPSAVS) are compositionally biased toward low complexity. The segment at residues 245–311 (KVADIPADDF…YEGEHRHTPS (67 aa)) is a DNA-binding region (WRKY). The span at 318–330 (PPAPPPPLALPLA) shows a compositional bias: pro residues.

The protein belongs to the WRKY group II-a family. In terms of tissue distribution, highly expressed in aleurone cells. In seeds, predominantly present in the plumule, radicle and scutellum of the embryo.

The protein localises to the nucleus. Functionally, transcription factor. Interacts, when in complex with WRKY71, specifically with the W box (5'-(T)TGAC[CT]-3'), a frequently occurring elicitor-responsive cis-acting element. Represses specifically gibberellic acid (GA)-induced promoters in aleurone cells, probably by interfering with GAM1. The protein is WRKY transcription factor WRKY51 of Oryza sativa subsp. indica (Rice).